The following is a 510-amino-acid chain: NAD(P)H-quinone oxidoreductase subunit 2 B, chloroplastic (510 aa).

13 consecutive transmembrane segments (helical) span residues 24-44 (LLLFHGSFIFPECILIFGLIL), 57-77 (IPWLYFISSTSLVMSITALLF), 99-119 (IFQFLILLCSTLCIPLSVEYI), 124-144 (MAITEFLLFVLTATLGGMFLC), 150-170 (ITIFVAPECFSLCSYLLSGYT), 183-203 (YLLMGGASSSILVHGFSWLYG), 227-247 (PGISIALIFITVGIGFKLSPA), 295-315 (WHLLLEILAILSMILGNLIAI), 323-343 (MLAYSSIGQIGYVIIGIIVGD), 347-367 (GYASMITYMLFYISMNLGTFA), 395-415 (ALSSALCLLSLGGLPPLAGFF), 418-438 (LHLFWCGWQAGLYFLVSIGLL), and 484-504 (MIVCVIASTIPGISMNPIIAI).

This sequence belongs to the complex I subunit 2 family. In terms of assembly, NDH is composed of at least 16 different subunits, 5 of which are encoded in the nucleus.

It localises to the plastid. It is found in the chloroplast thylakoid membrane. It catalyses the reaction a plastoquinone + NADH + (n+1) H(+)(in) = a plastoquinol + NAD(+) + n H(+)(out). The enzyme catalyses a plastoquinone + NADPH + (n+1) H(+)(in) = a plastoquinol + NADP(+) + n H(+)(out). NDH shuttles electrons from NAD(P)H:plastoquinone, via FMN and iron-sulfur (Fe-S) centers, to quinones in the photosynthetic chain and possibly in a chloroplast respiratory chain. The immediate electron acceptor for the enzyme in this species is believed to be plastoquinone. Couples the redox reaction to proton translocation, and thus conserves the redox energy in a proton gradient. The polypeptide is NAD(P)H-quinone oxidoreductase subunit 2 B, chloroplastic (Liriodendron tulipifera (Tuliptree)).